A 289-amino-acid chain; its full sequence is Protein FraH (289 aa).

A DZANK-type zinc finger spans residues 4–49 (CPNCNHPNPDGAVQCEACYTPLPATSNCPNCGATVQSDAAFCGQCG). A zinc finger lies at 18-48 (CEACYTPLPATSNCPNCGATVQSDAAFCGQC). Residues 204–260 (VHIGKPNDRIPPDVDVSGFANSEIVSRVHADIRLEGDAHYIEDVGSSNGTYINNLPL) form the FHA domain.

Functionally, putative heterocyst to vegetative cell connection. The sequence is that of Protein FraH (fraH) from Nostoc sp. (strain PCC 7120 / SAG 25.82 / UTEX 2576).